Here is a 103-residue protein sequence, read N- to C-terminus: Large ribosomal subunit protein bL21 (103 aa).

This sequence belongs to the bacterial ribosomal protein bL21 family. In terms of assembly, part of the 50S ribosomal subunit. Contacts protein L20.

This protein binds to 23S rRNA in the presence of protein L20. This Herminiimonas arsenicoxydans protein is Large ribosomal subunit protein bL21.